A 267-amino-acid polypeptide reads, in one-letter code: Phosphonates import ATP-binding protein PhnC 2 (267 aa).

The ABC transporter domain occupies 3 to 247; the sequence is LSLDGVDLVH…ALDALYANEQ (245 aa). ATP is bound at residue 36–43; sequence GPSGAGKT.

The protein belongs to the ABC transporter superfamily. Phosphonates importer (TC 3.A.1.9.1) family. In terms of assembly, the complex is composed of two ATP-binding proteins (PhnC), two transmembrane proteins (PhnE) and a solute-binding protein (PhnD).

It is found in the cell inner membrane. The enzyme catalyses phosphonate(out) + ATP + H2O = phosphonate(in) + ADP + phosphate + H(+). Its function is as follows. Part of the ABC transporter complex PhnCDE involved in phosphonates import. Responsible for energy coupling to the transport system. This chain is Phosphonates import ATP-binding protein PhnC 2, found in Pseudomonas aeruginosa (strain UCBPP-PA14).